We begin with the raw amino-acid sequence, 405 residues long: Pre-mRNA-splicing factor cwc-24 (405 aa).

Disordered regions lie at residues 1 to 114 and 162 to 184; these read MADT…NTIY and TKKK…DGTY. Residues 15 to 29 show a composition bias toward low complexity; it reads EPTTATPTAPIAPVA. The segment covering 31–46 has biased composition (basic residues); sequence FKKRGAKGKANLRKRP. Positions 56–70 are enriched in acidic residues; sequence SDDDSSDFESSEDEA. Residues 74-83 are compositionally biased toward basic residues; sequence RIKRRKKNHH. Residues 221–249 form a C3H1-type zinc finger; it reads DMAPDVCKDYKQTGFCGFGDNCKFLHARE. The RING-type zinc finger occupies 310 to 349; that stretch reads CIICRGPYSNSPVVTRCGHYFCEACALKRYRKDPSCAACG. Basic and acidic residues predominate over residues 370–386; it reads KARAERLRREARERGEE. The tract at residues 370 to 405 is disordered; that stretch reads KARAERLRREARERGEEVSEEEDEGEDEGEGAEGSD. A compositionally biased stretch (acidic residues) spans 387–405; that stretch reads VSEEEDEGEDEGEGAEGSD.

Belongs to the CWC24 family. As to quaternary structure, associated with the spliceosome.

It is found in the nucleus. In terms of biological role, involved in pre-mRNA splicing. The chain is Pre-mRNA-splicing factor cwc-24 (cwc-24) from Neurospora crassa (strain ATCC 24698 / 74-OR23-1A / CBS 708.71 / DSM 1257 / FGSC 987).